We begin with the raw amino-acid sequence, 356 residues long: Arginine kinase (356 aa).

Residue Ala-2 is modified to N-acetylalanine. In terms of domain architecture, Phosphagen kinase N-terminal spans 9–91; that stretch reads KLEEGFKKLE…FDPIIEDYHK (83 aa). 64–68 serves as a coordination point for L-arginine; sequence GVGIY. Positions 119–356 constitute a Phosphagen kinase C-terminal domain; it reads FVISTRVRCG…LELIKIEKEM (238 aa). Residues 122–126 and His-185 each bind ATP; that span reads STRVR. Glu-225 serves as a coordination point for L-arginine. An ATP-binding site is contributed by Arg-229. Cys-271 contacts L-arginine. ATP-binding positions include 280–284 and 309–314; these read RASVH and RGTRGE. Glu-314 provides a ligand contact to L-arginine.

The protein belongs to the ATP:guanido phosphotransferase family.

The catalysed reaction is L-arginine + ATP = N(omega)-phospho-L-arginine + ADP + H(+). This chain is Arginine kinase, found in Homarus gammarus (European lobster).